We begin with the raw amino-acid sequence, 305 residues long: Ribonuclease BN (305 aa).

Zn(2+) contacts are provided by His-64, His-66, Asp-68, His-69, His-141, Asp-212, and His-270. The Proton acceptor role is filled by Asp-68.

The protein belongs to the RNase Z family. RNase BN subfamily. As to quaternary structure, homodimer. The cofactor is Zn(2+).

Functionally, zinc phosphodiesterase, which has both exoribonuclease and endoribonuclease activities. This Shigella boydii serotype 18 (strain CDC 3083-94 / BS512) protein is Ribonuclease BN.